We begin with the raw amino-acid sequence, 606 residues long: UvrABC system protein C (606 aa).

The GIY-YIG domain maps to 18 to 96; the sequence is SQPGVYRMMN…IKSLNPRYNI (79 aa). The UVR domain occupies 205 to 240; sequence TEVLKSITRKMHEAAEEQEYEQAALFRDQIQSLRKI.

The protein belongs to the UvrC family. As to quaternary structure, interacts with UvrB in an incision complex.

The protein localises to the cytoplasm. Its function is as follows. The UvrABC repair system catalyzes the recognition and processing of DNA lesions. UvrC both incises the 5' and 3' sides of the lesion. The N-terminal half is responsible for the 3' incision and the C-terminal half is responsible for the 5' incision. The protein is UvrABC system protein C of Nitrosospira multiformis (strain ATCC 25196 / NCIMB 11849 / C 71).